We begin with the raw amino-acid sequence, 113 residues long: U11-theraphotoxin-Hhn1t (113 aa).

The signal sequence occupies residues 1-21 (MNTVRVTFLLVFVLAVSLGQA). Positions 22–74 (DKDENRMEMQEKTEQGKSYLDFAENLLLQKLEELEAKLLEEDSEESRNSRQKR) are excised as a propeptide. The segment covering 60–69 (LEEDSEESRN) has biased composition (basic and acidic residues). The disordered stretch occupies residues 60-83 (LEEDSEESRNSRQKRCIGEGVPCD). 3 cysteine pairs are disulfide-bonded: Cys75–Cys90, Cys82–Cys95, and Cys89–Cys110.

The protein belongs to the neurotoxin 14 (magi-1) family. 01 (HNTX-16) subfamily. In terms of tissue distribution, expressed by the venom gland.

The protein localises to the secreted. Probable ion channel inhibitor. The sequence is that of U11-theraphotoxin-Hhn1t from Cyriopagopus hainanus (Chinese bird spider).